The primary structure comprises 100 residues: Urease subunit gamma (100 aa).

The protein belongs to the urease gamma subunit family. As to quaternary structure, heterotrimer of UreA (gamma), UreB (beta) and UreC (alpha) subunits. Three heterotrimers associate to form the active enzyme.

It is found in the cytoplasm. The enzyme catalyses urea + 2 H2O + H(+) = hydrogencarbonate + 2 NH4(+). Its pathway is nitrogen metabolism; urea degradation; CO(2) and NH(3) from urea (urease route): step 1/1. The chain is Urease subunit gamma from Marinobacter nauticus (strain ATCC 700491 / DSM 11845 / VT8) (Marinobacter aquaeolei).